A 226-amino-acid chain; its full sequence is DNA mismatch repair protein MutH (226 aa).

It belongs to the MutH family.

The protein resides in the cytoplasm. In terms of biological role, sequence-specific endonuclease that cleaves unmethylated GATC sequences. It is involved in DNA mismatch repair. This is DNA mismatch repair protein MutH from Actinobacillus pleuropneumoniae serotype 5b (strain L20).